Reading from the N-terminus, the 219-residue chain is Ribose-5-phosphate isomerase A (219 aa).

Substrate contacts are provided by residues 28–31 (SGST), 81–84 (DGAD), and 94–97 (KGGG). Residue glutamate 103 is the Proton acceptor of the active site. Residue lysine 121 coordinates substrate.

The protein belongs to the ribose 5-phosphate isomerase family. In terms of assembly, homodimer.

It catalyses the reaction aldehydo-D-ribose 5-phosphate = D-ribulose 5-phosphate. The protein operates within carbohydrate degradation; pentose phosphate pathway; D-ribose 5-phosphate from D-ribulose 5-phosphate (non-oxidative stage): step 1/1. In terms of biological role, catalyzes the reversible conversion of ribose-5-phosphate to ribulose 5-phosphate. This Pasteurella multocida (strain Pm70) protein is Ribose-5-phosphate isomerase A.